The primary structure comprises 102 residues: N(4)-acetylcytidine amidohydrolase (102 aa).

Positions 6–93 (TFFSRFEQDI…IKEIYPGLDE (88 aa)) constitute an ASCH domain. The active-site Proton acceptor is the lysine 20. Catalysis depends on threonine 23, which acts as the Nucleophile. The Proton donor role is filled by glutamate 73.

Belongs to the N(4)-acetylcytidine amidohydrolase family.

It catalyses the reaction N(4)-acetylcytidine + H2O = cytidine + acetate + H(+). It carries out the reaction N(4)-acetyl-2'-deoxycytidine + H2O = 2'-deoxycytidine + acetate + H(+). The enzyme catalyses N(4)-acetylcytosine + H2O = cytosine + acetate + H(+). Functionally, catalyzes the hydrolysis of N(4)-acetylcytidine (ac4C). The chain is N(4)-acetylcytidine amidohydrolase from Serratia proteamaculans (strain 568).